The chain runs to 182 residues: Cytidylate kinase (182 aa).

7-15 (GLPGSGTTS) is an ATP binding site.

The protein belongs to the cytidylate kinase family. Type 2 subfamily.

The protein resides in the cytoplasm. The enzyme catalyses CMP + ATP = CDP + ADP. The catalysed reaction is dCMP + ATP = dCDP + ADP. This Methanoregula boonei (strain DSM 21154 / JCM 14090 / 6A8) protein is Cytidylate kinase.